Here is a 548-residue protein sequence, read N- to C-terminus: Fluconazole resistance protein 1 (548 aa).

A disordered region spans residues Ser30–Pro94. Positions Ala31 to Tyr51 are enriched in basic and acidic residues. Low complexity predominate over residues Ser60 to Ser73. The next 12 helical transmembrane spans lie at Leu104–Thr124, Val139–Phe159, Phe179–Val199, Ile203–Ile223, Leu230–Gly250, Phe261–Phe281, Ile347–Gly367, Val376–Ile396, Phe416–Trp436, Val440–Phe460, Ala476–Phe496, and Val511–Ile531.

This sequence belongs to the major facilitator superfamily.

It is found in the membrane. Functionally, probable efflux transporter. Confers resistance to the azole derivative fluconazole (FCZ). This is Fluconazole resistance protein 1 (FLR1) from Saccharomyces cerevisiae (strain ATCC 204508 / S288c) (Baker's yeast).